The chain runs to 317 residues: WD repeat-containing protein 82 (317 aa).

6 WD repeats span residues 21–60 (ENTDKINAIDFAPNGEHLISCSEDDQIVIYDCEKGTQSRT), 107–146 (GHTKKVISLCISPVEDTFLSGSLDKTLRLWDLRSPNCQGL), 148–186 (HLSGRPIAAYDPEGLIFAAGVNSESIKLYDLRSFDKGPF), 194–233 (EKECDWTGLKFSRDGKTILISTNGSVIRLVDAFHGTPLQT), 238–278 (PNNK…KVSV), and 282–317 (DHPGPVQCVQFNPKYMMLASACTNMAFWLPTSEEGL).

This sequence belongs to the WD repeat SWD2 family. In terms of assembly, component of the SET1 complex, composed at least of the catalytic subunit Set1, wds/WDR5, Wdr82, Rbbp5, ash2, Cfp1/CXXC1, hcf and Dpy-30L1. Interacts with male-specific lethal (MSL) histone acetyltransferase complex at least composed of mof, msl-1, msl-2 and msl-3. Interacts with su(sable).

The protein resides in the nucleus. Its function is as follows. Component of the SET1 complex that specifically di- and trimethylates 'Lys-4' of histone H3. Together with su(sable), part of a transcription termination checkpoint that promotes transcription termination of aberrant RNAs and their subsequent degradation by the nuclear exosome. The sequence is that of WD repeat-containing protein 82 from Drosophila melanogaster (Fruit fly).